A 177-amino-acid polypeptide reads, in one-letter code: PRELI domain-containing protein 2 (177 aa).

Residues 1 to 175 form the PRELI/MSF1 domain; it reads MGVTVDVHQV…LLKEQCGSPL (175 aa).

This is PRELI domain-containing protein 2 (Prelid2) from Mus musculus (Mouse).